The primary structure comprises 357 residues: DNA replication and repair protein RecF (357 aa).

30–37 (GANGSGKT) provides a ligand contact to ATP.

This sequence belongs to the RecF family.

The protein localises to the cytoplasm. The RecF protein is involved in DNA metabolism; it is required for DNA replication and normal SOS inducibility. RecF binds preferentially to single-stranded, linear DNA. It also seems to bind ATP. The chain is DNA replication and repair protein RecF from Enterobacter sp. (strain 638).